The chain runs to 336 residues: Potassium channel subfamily K member 1 (336 aa).

The Cytoplasmic portion of the chain corresponds to Met1–Ala20. A helical transmembrane segment spans residues Trp21–Phe41. The Extracellular segment spans residues Ser42 to Asp103. N-linked (GlcNAc...) asparagine glycosylation is present at Asn95. The helical intramembrane region spans Phe104 to Ser116. The stretch at Thr117 to His122 is an intramembrane region. Residues Thr117–His122 are selectivity filter 1. Topologically, residues Thr123–Ala132 are extracellular. Residues Phe133–Val156 form a helical membrane-spanning segment. At Thr157–Ile181 the chain is on the cytoplasmic side. A helical transmembrane segment spans residues Val182–Val202. Over Phe203–Asn211 the chain is Extracellular. Positions Phe212–Ser224 form an intramembrane region, helical. Residues Thr225–Asp230 are selectivity filter 2. An intramembrane segment occupies Thr225–Tyr231. Residues Val232–Glu243 lie on the Extracellular side of the membrane. A helical membrane pass occupies residues Leu244–Phe267. Residues Cys268–His336 are Cytoplasmic-facing. Lys274 participates in a covalent cross-link: Glycyl lysine isopeptide (Lys-Gly) (interchain with G-Cter in SUMO). Positions Ile293 to Leu299 are important for intracellular retention in recycling endosomes. Positions Gly310–His336 are disordered. Ser326 bears the Phosphoserine mark.

Belongs to the two pore domain potassium channel (TC 1.A.1.8) family. As to quaternary structure, homodimer; disulfide-linked. Heterodimer with KCNK2; disulfide-linked. In astrocytes, forms mostly heterodimeric potassium channels with KCNK2, with only a minor proportion of functional channels containing homodimeric KCNK1. Interacts with KCNK3 and KCNK9, forming functional heterodimeric channels. Interacts with GNG4. Identified in a complex with PSD and ARF6; interacts only with PSD that is bound to ARF6. Interacts with UBE2I. Sumoylation is controversial. Sumoylated by UBE2I. Not sumoylated when expressed in xenopus oocytes or mammalian cells. Sumoylation inactivates the channel, but does not interfere with expression at the cell membrane. Sumoylation of a single subunit is sufficient to silence the dimeric channel. Sumoylation of KCNK1 is sufficient to silence heterodimeric channels formed by KCNK1 and KCNK3 or KCNK9. Desumoylated by SENP1; this activates the channel. Desumoylated by SENP1; this strongly increases halothane-mediated activation of heterodimeric channels formed with KCNK9. SENP1 treatment has no effect. As to expression, detected in brain and in kidney cortex and medulla, especially at the renal brush border membranes of the proximal convoluted tubules, in distal tubules and on intercalated cells of the collecting duct. Detected in cerebellum granule neurons. Detected in astrocytes in hippocampus stratum radiatum. Highly expressed in the stria vascularis in the cochlea. Detected in neurons in Scarpa's ganglion in the inner ear, at nerve terminals in the crista ampullaris, in supporting cells and dark cells, but not in hair cells (at protein level). Detected in the brain cerebellar granule cell layer, amygdala, thalamus reticular nucleus, habenula, mesencephalic trigeminal neurons, neocortex and piriform cortex, and at lower levels in the olfactory bulb. Detected in Scarpa's ganglia and crista ampullaris in the inner ear.

The protein localises to the cell membrane. Its subcellular location is the recycling endosome. The protein resides in the apical cell membrane. It localises to the cytoplasmic vesicle. It is found in the perikaryon. The protein localises to the cell projection. Its subcellular location is the dendrite. The protein resides in the synaptic cell membrane. The catalysed reaction is K(+)(in) = K(+)(out). The enzyme catalyses NH4(+)(in) = NH4(+)(out). It catalyses the reaction Na(+)(in) = Na(+)(out). It carries out the reaction Rb(+)(in) = Rb(+)(out). The catalysed reaction is Cs(+)(in) = Cs(+)(out). The enzyme catalyses Li(+)(in) = Li(+)(out). It catalyses the reaction L-glutamate(out) = L-glutamate(in). It carries out the reaction chloride(in) = chloride(out). Inhibited by 100 uM quinine. Slightly inhibited by Ba(+). Activity is first increased and then decreased when the extracellular pH is lowered to 6.0. In terms of biological role, ion channel that contributes to passive transmembrane potassium transport and to the regulation of the resting membrane potential in brain astrocytes, but also in kidney and in other tissues. Forms dimeric channels through which potassium ions pass in accordance with their electrochemical gradient. The channel is selective for K(+) ions at physiological potassium concentrations and at neutral pH, but becomes permeable to Na(+) at subphysiological K(+) levels and upon acidification of the extracellular medium. The homodimer has very low potassium channel activity, when expressed in heterologous systems, and can function as weakly inward rectifying potassium channel. Channel activity is modulated by activation of serotonin receptors. Heterodimeric channels containing KCNK1 and KCNK2 have much higher activity, and may represent the predominant form in astrocytes. Heterodimeric channels containing KCNK1 and KCNK3 or KCNK9 have much higher activity. Heterodimeric channels formed by KCNK1 and KCNK9 may contribute to halothane-sensitive currents. Mediates outward rectifying potassium currents in dentate gyrus granule cells and contributes to the regulation of their resting membrane potential. Contributes to the regulation of action potential firing in dentate gyrus granule cells and down-regulates their intrinsic excitability. Contributes to the regulation of the resting membrane potential of pancreatic beta cells. In astrocytes, the heterodimer formed by KCNK1 and KCNK2 is required for rapid glutamate release in response to activation of G-protein coupled receptors, such as F2R and CNR1. Required for normal ion and water transport in the kidney. The low channel activity of homodimeric KCNK1 may be due to sumoylation. The low channel activity may be due to rapid internalization from the cell membrane and retention in recycling endosomes. Permeable to monovalent cations with ion selectivity for K(+) &gt; Rb(+) &gt;&gt; NH4(+) &gt;&gt; Cs(+) = Na(+) = Li(+). The polypeptide is Potassium channel subfamily K member 1 (Rattus norvegicus (Rat)).